We begin with the raw amino-acid sequence, 431 residues long: MAQKIQSVKGMNDLLPVGQKDFKLTAVFWQAFEDTVNRWTRAYGYQQIRTPIVEQTGLFVRSIGEETDVVGKEMYTFSDSNDSLSLSLRPEGTASCLRAVVEHNLLYNSPQKLWYMGPMFRRERPQKGRYRQFHQVGIEALGFEGPDIDAEIIAMSADLWEKLGIREYLTLEINSLGNREERAAHRAALVEYLTRYEAQLDEDSKRRLKTNPLRVLDTKNPDLQEICNAAPRLVDYLGEASQNHYARFKAMLDGLGIQYIENSRLVRGLDYYNQTVFEWTTDKLGAQATVCGGGRYDGLIEELGGKPAPSIGFAMGIERLLLLVSEYGSLEVNAAPDVYAMHQGEGADLQVMKYAQALRAQGFNVIQHSGYQSLKAQMKKADNSGARFALIVAQDELADGTVTLKDMNGAHGQQTVSATDLTDTLQQWKNA.

This sequence belongs to the class-II aminoacyl-tRNA synthetase family. In terms of assembly, homodimer.

Its subcellular location is the cytoplasm. The enzyme catalyses tRNA(His) + L-histidine + ATP = L-histidyl-tRNA(His) + AMP + diphosphate + H(+). The sequence is that of Histidine--tRNA ligase from Neisseria gonorrhoeae (strain ATCC 700825 / FA 1090).